Reading from the N-terminus, the 161-residue chain is 6,7-dimethyl-8-ribityllumazine synthase (161 aa).

Residues Trp-31, 63–65 (SFE), and 85–87 (VVI) contribute to the 5-amino-6-(D-ribitylamino)uracil site. 90–91 (GT) lines the (2S)-2-hydroxy-3-oxobutyl phosphate pocket. The Proton donor role is filled by His-93. A 5-amino-6-(D-ribitylamino)uracil-binding site is contributed by Phe-118. Arg-132 provides a ligand contact to (2S)-2-hydroxy-3-oxobutyl phosphate.

It belongs to the DMRL synthase family.

The catalysed reaction is (2S)-2-hydroxy-3-oxobutyl phosphate + 5-amino-6-(D-ribitylamino)uracil = 6,7-dimethyl-8-(1-D-ribityl)lumazine + phosphate + 2 H2O + H(+). It functions in the pathway cofactor biosynthesis; riboflavin biosynthesis; riboflavin from 2-hydroxy-3-oxobutyl phosphate and 5-amino-6-(D-ribitylamino)uracil: step 1/2. Catalyzes the formation of 6,7-dimethyl-8-ribityllumazine by condensation of 5-amino-6-(D-ribitylamino)uracil with 3,4-dihydroxy-2-butanone 4-phosphate. This is the penultimate step in the biosynthesis of riboflavin. This is 6,7-dimethyl-8-ribityllumazine synthase from Paenarthrobacter aurescens (strain TC1).